Here is a 142-residue protein sequence, read N- to C-terminus: MYLQPKKVRWRKQRRGTLKGKAFRGNKLAFGEYGIQALDRAWITQQQIEAVRVALVRSLKKGAKVWIRIFPDKPYTKKPNEVRMGGGKGDPEGFVAVVKPGRILFEFTGVPEEVAQEAFTIAASKLPIPVRLVKYGEFTFKY.

The protein belongs to the universal ribosomal protein uL16 family. Part of the 50S ribosomal subunit.

Its function is as follows. Binds 23S rRNA and is also seen to make contacts with the A and possibly P site tRNAs. The chain is Large ribosomal subunit protein uL16 from Aquifex aeolicus (strain VF5).